Consider the following 629-residue polypeptide: Tudor and KH domain-containing protein homolog (629 aa).

Residues 9–29 traverse the membrane as a helical segment; the sequence is LPIALGLSLVTVTAFVAYYVL. KH domains are found at residues 46–109 and 119–185; these read INTI…ETLI and IMSE…KKLV. The interval 198 to 240 is disordered; that stretch reads IEQSKRPPRHSSSPPSPCPSPGDRDADADAQGDVDHTRVKYKR. Positions 219-240 are enriched in basic and acidic residues; it reads GDRDADADAQGDVDHTRVKYKR. One can recognise a Tudor domain in the interval 297-362; the sequence is HVSVGQVVAA…CELRADLLRL (66 aa). Residues 464-526 form a disordered region; sequence PAPSPRPSPP…GDDSKDKDGI (63 aa).

This sequence belongs to the Tdrkh family. In terms of assembly, interacts with (symmetrically methylated) Siwi. Interacts with (symmetrically methylated) Ago3. Interacts with PNLDC1/trimmer; interaction takes place on the mitochondrial surface and recruits PNLDC1/trimmer to Siwi-bound pre-piRNAs.

The protein resides in the mitochondrion outer membrane. Participates in the primary piRNA biogenesis pathway and is required during spermatogenesis to repress transposable elements and prevent their mobilization, which is essential for the germline integrity. The piRNA metabolic process mediates the repression of transposable elements during meiosis by forming complexes composed of piRNAs and Piwi proteins (Siwi or Ago3) and govern the methylation and subsequent repression of transposons. Required for the final steps of primary piRNA biogenesis by participating in the processing of 31-37 nt intermediates into mature piRNAs: acts by recruiting the exonuclease PNLDC1/trimmer to Siwi-bound pre-piRNAs. The protein is Tudor and KH domain-containing protein homolog of Bombyx mori (Silk moth).